The primary structure comprises 311 residues: uncharacterized protein (311 aa).

Positions 1–13 are cleaved as a signal peptide; that stretch reads MLLSLIFPIAVLG. N-linked (GlcNAc...) asparagine glycosylation occurs at N115.

It localises to the secreted. This is an uncharacterized protein from Encephalitozoon cuniculi (strain GB-M1) (Microsporidian parasite).